The primary structure comprises 115 residues: Photosystem II reaction center Psb28 protein (115 aa).

Belongs to the Psb28 family. Part of the photosystem II complex.

It localises to the plastid. The protein localises to the chloroplast thylakoid membrane. The sequence is that of Photosystem II reaction center Psb28 protein from Pyropia yezoensis (Susabi-nori).